Consider the following 430-residue polypeptide: 3-phosphoshikimate 1-carboxyvinyltransferase (430 aa).

The 3-phosphoshikimate site is built by Lys-25, Ser-26, and Arg-30. Residue Lys-25 participates in phosphoenolpyruvate binding. Residues Gly-98 and Arg-126 each contribute to the phosphoenolpyruvate site. 3-phosphoshikimate is bound by residues Ser-169, Ser-170, Gln-171, Ser-198, Glu-313, and His-342. Gln-171 contacts phosphoenolpyruvate. Glu-313 acts as the Proton acceptor in catalysis. 3 residues coordinate phosphoenolpyruvate: Arg-346, Arg-387, and Lys-412.

The protein belongs to the EPSP synthase family. As to quaternary structure, monomer.

It is found in the cytoplasm. The enzyme catalyses 3-phosphoshikimate + phosphoenolpyruvate = 5-O-(1-carboxyvinyl)-3-phosphoshikimate + phosphate. It participates in metabolic intermediate biosynthesis; chorismate biosynthesis; chorismate from D-erythrose 4-phosphate and phosphoenolpyruvate: step 6/7. In terms of biological role, catalyzes the transfer of the enolpyruvyl moiety of phosphoenolpyruvate (PEP) to the 5-hydroxyl of shikimate-3-phosphate (S3P) to produce enolpyruvyl shikimate-3-phosphate and inorganic phosphate. The protein is 3-phosphoshikimate 1-carboxyvinyltransferase of Mycobacterium leprae (strain TN).